A 267-amino-acid chain; its full sequence is Transcription factor Spi-B (267 aa).

The TAD1 (Acidic) stretch occupies residues methionine 1–proline 31. The segment at leucine 41–phenylalanine 62 is TAD2. The segment at residues leucine 174–aspartate 257 is a DNA-binding region (ETS).

The protein belongs to the ETS family. In terms of assembly, can form homotypic interactions. Interacts with IRF4/Pip. Interacts with JUN. Interacts with TBP. May also interact with CREBBP and EP300. Interacts with NONO/p54(nrb). In terms of tissue distribution, expressed in the medulla of the thymus, the spleen and germinal centers of the lymph nodes. Expressed in B-cells and T-cells, expression increases during B-cell maturation and decreases during T-cell maturation.

The protein resides in the nucleus. In terms of biological role, sequence specific transcriptional activator which binds to the PU-box, a purine-rich DNA sequence (5'-GAGGAA-3') that can act as a lymphoid-specific enhancer. Promotes development of plasmacytoid dendritic cells (pDCs), also known as type 2 DC precursors (pre-DC2) or natural interferon (IFN)-producing cells. These cells have the capacity to produce large amounts of interferon and block viral replication. Required for B-cell receptor (BCR) signaling, which is necessary for normal B-cell development and antigenic stimulation. In Mus musculus (Mouse), this protein is Transcription factor Spi-B (Spib).